The following is a 305-amino-acid chain: UDP-3-O-acyl-N-acetylglucosamine deacetylase (305 aa).

Residues His78, His237, and Asp241 each coordinate Zn(2+). The active-site Proton donor is His264.

This sequence belongs to the LpxC family. The cofactor is Zn(2+).

The catalysed reaction is a UDP-3-O-[(3R)-3-hydroxyacyl]-N-acetyl-alpha-D-glucosamine + H2O = a UDP-3-O-[(3R)-3-hydroxyacyl]-alpha-D-glucosamine + acetate. It participates in glycolipid biosynthesis; lipid IV(A) biosynthesis; lipid IV(A) from (3R)-3-hydroxytetradecanoyl-[acyl-carrier-protein] and UDP-N-acetyl-alpha-D-glucosamine: step 2/6. Its function is as follows. Catalyzes the hydrolysis of UDP-3-O-myristoyl-N-acetylglucosamine to form UDP-3-O-myristoylglucosamine and acetate, the committed step in lipid A biosynthesis. The chain is UDP-3-O-acyl-N-acetylglucosamine deacetylase from Burkholderia multivorans (strain ATCC 17616 / 249).